Consider the following 1065-residue polypeptide: Presequence protease, mitochondrial (1065 aa).

A mitochondrion-targeting transit peptide spans 1–42; the sequence is MLRSFSGAGKCKCRIPVSRQPVCGRSLRISSTLTPWNQSRRA. Position 117 (His117) interacts with Zn(2+). Glu120 serves as the catalytic Proton acceptor. His121 contributes to the Zn(2+) binding site. Glu193 is a catalytic residue. Position 230 (Glu230) interacts with Zn(2+).

The protein belongs to the peptidase M16 family. PreP subfamily. As to quaternary structure, monomer and homodimer; homodimerization is induced by binding of the substrate. The cofactor is Zn(2+).

It localises to the mitochondrion intermembrane space. It is found in the mitochondrion matrix. Its function is as follows. Degrades mitochondrial transit peptides after their cleavage in the intermembrane space or in the matrix, and presequence peptides; clearance of these peptides is required to keep the presequence processing machinery running. Preferentially cleaves the N-terminal side of paired basic amino acid residues. Also degrades other unstructured peptides. May function as an ATP-dependent peptidase as opposed to a metalloendopeptidase. In Aspergillus fumigatus (strain ATCC MYA-4609 / CBS 101355 / FGSC A1100 / Af293) (Neosartorya fumigata), this protein is Presequence protease, mitochondrial (cym1).